The primary structure comprises 322 residues: Undecaprenyl-phosphate 4-deoxy-4-formamido-L-arabinose transferase (322 aa).

At 1–235 the chain is on the cytoplasmic side; it reads MFEIHPVKKV…TCLTTTPLRM (235 aa). Residues 236 to 256 traverse the membrane as a helical segment; it reads LSLLGSIIAIGGFSIAVLLVI. At 257-269 the chain is on the periplasmic side; sequence LRLTFGPQWAAEG. The helical transmembrane segment at 270 to 290 threads the bilayer; that stretch reads VFMLFAVLFTFIGAQFIGMGL. At 291-322 the chain is on the cytoplasmic side; the sequence is LGEYIGRIYTDVRARPRYFVQQVIRPSSKENE.

This sequence belongs to the glycosyltransferase 2 family.

Its subcellular location is the cell inner membrane. The catalysed reaction is UDP-4-deoxy-4-formamido-beta-L-arabinose + di-trans,octa-cis-undecaprenyl phosphate = 4-deoxy-4-formamido-alpha-L-arabinopyranosyl di-trans,octa-cis-undecaprenyl phosphate + UDP. It participates in glycolipid biosynthesis; 4-amino-4-deoxy-alpha-L-arabinose undecaprenyl phosphate biosynthesis; 4-amino-4-deoxy-alpha-L-arabinose undecaprenyl phosphate from UDP-4-deoxy-4-formamido-beta-L-arabinose and undecaprenyl phosphate: step 1/2. The protein operates within bacterial outer membrane biogenesis; lipopolysaccharide biosynthesis. Catalyzes the transfer of 4-deoxy-4-formamido-L-arabinose from UDP to undecaprenyl phosphate. The modified arabinose is attached to lipid A and is required for resistance to polymyxin and cationic antimicrobial peptides. The chain is Undecaprenyl-phosphate 4-deoxy-4-formamido-L-arabinose transferase from Shigella sonnei (strain Ss046).